A 190-amino-acid chain; its full sequence is Elongation factor P-like protein (190 aa).

Belongs to the elongation factor P family.

The sequence is that of Elongation factor P-like protein from Marinomonas sp. (strain MWYL1).